The chain runs to 839 residues: Oligopeptide transporter phomP2 (839 aa).

The tract at residues 1-58 (MEADPKVPFTDEMNIQDEHNWESGSWSSSRRSNDSNVTLLSRRSSVEQHEDERQKDSD) is disordered. Over residues 23–36 (SGSWSSSRRSNDSN) the composition is skewed to low complexity. N-linked (GlcNAc...) asparagine glycans are attached at residues Asn-33 and Asn-36. Over residues 44-58 (SSVEQHEDERQKDSD) the composition is skewed to basic and acidic residues. A run of 6 helical transmembrane segments spans residues 105-125 (VWLL…VYYF), 177-197 (ALVV…GPLS), 210-230 (PWAI…VGLY), 268-288 (VFMA…FVFP), 315-335 (GFGL…SPLF), and 345-365 (FVGA…SDAL). N-linked (GlcNAc...) asparagine glycosylation is found at Asn-386 and Asn-398. Transmembrane regions (helical) follow at residues 415–435 (AMHF…AVLF), 478–498 (AWYA…LYAG), 505–525 (WGLQ…GMLF), and 585–605 (WELL…NWAV). Positions 629-646 (QGLGLGQGGGGGGGGGGQ) are enriched in gly residues. The tract at residues 629 to 654 (QGLGLGQGGGGGGGGGGQQQRAAGAH) is disordered. The next 3 membrane-spanning stretches (helical) occupy residues 665–685 (NFFS…FGGG), 697–717 (WLLP…WLIH), and 728–748 (WPLH…FPTT). A glycan (N-linked (GlcNAc...) asparagine) is linked at Asn-749. A helical transmembrane segment spans residues 781 to 801 (AGLDCGAQLVQMVLGVAFLVF).

The protein belongs to the oligopeptide OPT transporter family.

Its subcellular location is the membrane. Its function is as follows. Oligopeptide transporter; part of the gene cluster that mediates the biosynthesis of the phomopsins, a group of hexapeptide mycotoxins which infects lupins and causes lupinosis disease in livestock. This Diaporthe leptostromiformis (Lupinosis disease fungus) protein is Oligopeptide transporter phomP2.